The sequence spans 634 residues: Probable potassium transport system protein Kup (634 aa).

Helical transmembrane passes span 21–41, 58–78, 110–130, 147–167, 179–199, 223–243, 258–278, 296–316, 348–368, 377–397, 403–423, and 427–447; these read LVIG…LYTL, VLGI…LKYV, MYVV…DGVI, APKL…MLFL, AFGP…VYNM, WHAV…EALY, WQFV…ALVL, ALYP…QALI, IYVP…VIGF, AYGV…IIYA, VPAP…CAFF, and IIKF…LFTL.

It belongs to the HAK/KUP transporter (TC 2.A.72) family.

Its subcellular location is the cell inner membrane. The catalysed reaction is K(+)(in) + H(+)(in) = K(+)(out) + H(+)(out). Transport of potassium into the cell. Likely operates as a K(+):H(+) symporter. This Xanthomonas axonopodis pv. citri (strain 306) protein is Probable potassium transport system protein Kup.